A 90-amino-acid chain; its full sequence is MAVTYEKTFEIEIINELSASVYNRVLNYVLNHELNKNDSQLLEVNLLNQLKLAKRVNLFDYSLEELQAVHEYWRSMNRYSKQVLNKEKVA.

The protein belongs to the epsilon antitoxin family. As to quaternary structure, in the presence of the zeta toxin, forms an inactive PezA(2)PezT(2) heterotetramer. The heterotetramer is still able to bind the zeta toxin substrate UNAG.

Functionally, antitoxin component of a type II toxin-antitoxin (TA) system. Neutralizes the toxic effect of cognate zeta toxin. Part of a postsegregational killing (PSK) system involved in the killing of plasmid-free cells. Continuous synthesis of the epsilon antitoxin is required to counteract the zeta toxin. The protein is Antitoxin epsilon of Streptococcus pyogenes.